The sequence spans 378 residues: Odorant receptor 33a (378 aa).

Topologically, residues 1-33 are cytoplasmic; that stretch reads MDSRRKVRSENLYKTYWLYWRLLGVEGDYPFRR. The helical transmembrane segment at 34 to 54 threads the bilayer; that stretch reads LVDFTITSFITILFPVHLILG. Residues 55–62 lie on the Extracellular side of the membrane; sequence MYKKPQIQ. The chain crosses the membrane as a helical span at residues 63 to 83; that stretch reads VFRSLHFTSECLFCSYKFFCF. Over 84 to 127 the chain is Cytoplasmic; sequence RWKLKEIKTIEGLLQDLDSRVESEEERNYFNQNPSRVARMLSKS. The chain crosses the membrane as a helical span at residues 128–148; the sequence is YLVAAISAIITATVAGLFSTG. Residues 149-163 are Extracellular-facing; sequence RNLMYLGWFPYDFQA. Residues 164 to 184 traverse the membrane as a helical segment; sequence TAAIYWISFSYQAIGSSLLIL. Over 185 to 254 the chain is Cytoplasmic; that stretch reads ENLANDSYPP…LLRSTLHLSQ (70 aa). The chain crosses the membrane as a helical span at residues 255–275; sequence LGQFLSSGINISITLINILFF. Residues 276–285 are Extracellular-facing; it reads AENNFAMLYY. A helical membrane pass occupies residues 286 to 306; that stretch reads AVFFAAMLIELFPSCYYGILM. The Cytoplasmic portion of the chain corresponds to 307 to 355; the sequence is TMEFDKLPYAIFSSNWLKMDKRYNRSLIILMQLTLVPVNIKAGGIVGID. The chain crosses the membrane as a helical span at residues 356–376; it reads MSAFFATVRMAYSFYTLALSF. The Extracellular segment spans residues 377-378; the sequence is RV.

This sequence belongs to the insect chemoreceptor superfamily. Heteromeric odorant receptor channel (TC 1.A.69) family. Or2a subfamily. Interacts with Orco. Complexes exist early in the endomembrane system in olfactory sensory neurons (OSNs), coupling these complexes to the conserved ciliary trafficking pathway. In terms of tissue distribution, expressed in 1-2 cells on the distal edge of the antenna but not the maxillary palp.

It is found in the cell membrane. In terms of biological role, odorant receptor which mediates acceptance or avoidance behavior, depending on its substrates. The odorant receptor repertoire encodes a large collection of odor stimuli that vary widely in identity, intensity, and duration. May form a complex with Orco to form odorant-sensing units, providing sensitive and prolonged odorant signaling and calcium permeability. The polypeptide is Odorant receptor 33a (Or33a) (Drosophila melanogaster (Fruit fly)).